We begin with the raw amino-acid sequence, 66 residues long: Large ribosomal subunit protein bL35 (66 aa).

Basic residues predominate over residues 1-16; that stretch reads MPKQKTHRASAKRFKR. The disordered stretch occupies residues 1 to 21; it reads MPKQKTHRASAKRFKRTGSGG.

Belongs to the bacterial ribosomal protein bL35 family.

The sequence is that of Large ribosomal subunit protein bL35 from Streptococcus agalactiae serotype Ia (strain ATCC 27591 / A909 / CDC SS700).